A 247-amino-acid chain; its full sequence is Uridylate kinase (247 aa).

18–21 is an ATP binding site; it reads KLSG. Gly60 provides a ligand contact to UMP. 2 residues coordinate ATP: Gly61 and Arg65. UMP-binding positions include Asp80 and 141–148; that span reads TGNPFFTT. Residues Thr168, Tyr174, and Asp177 each contribute to the ATP site.

This sequence belongs to the UMP kinase family. In terms of assembly, homohexamer.

The protein resides in the cytoplasm. It carries out the reaction UMP + ATP = UDP + ADP. It participates in pyrimidine metabolism; CTP biosynthesis via de novo pathway; UDP from UMP (UMPK route): step 1/1. Inhibited by UTP. Catalyzes the reversible phosphorylation of UMP to UDP. The sequence is that of Uridylate kinase from Pseudomonas putida (strain ATCC 47054 / DSM 6125 / CFBP 8728 / NCIMB 11950 / KT2440).